The chain runs to 348 residues: Galactose-1-phosphate uridylyltransferase (348 aa).

28-31 (RAKR) is a binding site for UDP-alpha-D-glucose. Zn(2+)-binding residues include C52 and C55. Residues V61 and 77–78 (ND) contribute to the UDP-alpha-D-glucose site. H115 contributes to the Zn(2+) binding site. UDP-alpha-D-glucose-binding positions include N153 and 159–161 (GCS). H164 serves as a coordination point for Zn(2+). H166 (tele-UMP-histidine intermediate) is an active-site residue. Q168 is a UDP-alpha-D-glucose binding site. Fe cation contacts are provided by E182, H281, H296, and H298. UDP-alpha-D-glucose is bound by residues 311–312 (KF), 316–317 (YE), and Q323.

The protein belongs to the galactose-1-phosphate uridylyltransferase type 1 family. Zn(2+) is required as a cofactor.

It carries out the reaction alpha-D-galactose 1-phosphate + UDP-alpha-D-glucose = alpha-D-glucose 1-phosphate + UDP-alpha-D-galactose. It participates in carbohydrate metabolism; galactose metabolism. The protein is Galactose-1-phosphate uridylyltransferase (galT) of Salmonella typhimurium (strain LT2 / SGSC1412 / ATCC 700720).